The sequence spans 110 residues: MAQAAQINVLDISTRLRVEHDKKRRQFSIRLNGSHDKAVLLYEYVGKKTVDLQHTEVPEAYRGREIAKHLAKAAMDFVVEEDLKAHLTCWYIQKFVKENPHPQYLERILH.

An N-acetyltransferase domain is found at 19 to 109 (EHDKKRRQFS…PHPQYLERIL (91 aa)).

The protein belongs to the NATD1 family.

This Danio rerio (Zebrafish) protein is Protein NATD1 (natd1).